Consider the following 304-residue polypeptide: Homoserine kinase (304 aa).

Residue 92 to 102 coordinates ATP; sequence PLARGLGSSAT.

The protein belongs to the GHMP kinase family. Homoserine kinase subfamily.

It localises to the cytoplasm. It carries out the reaction L-homoserine + ATP = O-phospho-L-homoserine + ADP + H(+). Its pathway is amino-acid biosynthesis; L-threonine biosynthesis; L-threonine from L-aspartate: step 4/5. In terms of biological role, catalyzes the ATP-dependent phosphorylation of L-homoserine to L-homoserine phosphate. The sequence is that of Homoserine kinase from Nostoc punctiforme (strain ATCC 29133 / PCC 73102).